The primary structure comprises 1158 residues: MGLKIIYGRAGTGKSTFCINQIKKKINNSPNNKLILLVPEQFTFQTENKVLSAIGERYVLNAEVLSFKRLAHNVFNECGGATRTIMGDAGKSMLIFKVLEDLGDNMTVFKNASRQKGFIDIASKTITEFKKYNVNNEVLDLTINEIEDENLKMKMEELKDVFNEFNSRLHEGYVDEEDQLLLLNEKLDGCSLYDGAEIWIDEFSSFTPNQLSVIGKLLKRAKSVNITLSIDEVNSLKGESDLFVATKNTEKRLMNLIQEEGIAFSGYINLNEDIPYRFKENKELAHIERQLYAYPFKQYRGKNNSLRLYRANNNYDEIEFVAKDILRLVREKQYRFKDISVICRDVDNYEKVVSAIFSEYEIPYYIDKKIDIASNPLIVFINSAVDIISKNWTYESMFKYLKTGLIKEFRGIEGAELIDELENYVLAYGIKGKKWMEEWVNYSSSILKEEEISEENKQRLERLNDIRETIVTPLDEFNKQCKGKKTLKEFATILYEFLDSKLDIMDTLDKYVDYFKENDMAIEAKEYSEVRDIFIDVLEQAVDVLGNEVMDLNEFMKVLNIGLSQYEMGLIPVALDQVNIGDITRIKSRGTKALYIIGVNDGVLPSASKEEGILSDNDREILLEKGISLASDTRTKIFEEQFLVYTAFTIAEEYLVVTYPLADFEGKSQRPSIIVHRLKKILPNVKEESEGFKLVDDKYEKISAKIPTLNELMIAIRKNYDGAEIEDYWKYVYDWYLREPKWKERIEYVRKGLEYTNLENNISKEKAKKLYEDNKNKISLSVSRLERYAQCPFAYYIQYGLKAKDRKIYEFTAPDLGSFMHEILDEFTNEIKEKDLKWSDLSKENCRNIINSLVDNQVKNNKSSILNSSKRYSYFTDRFKRILTKSVMVISEQMKRSDFEIYKNELAFGFSKDVNSIKLDLPSGESFYLNGRIDRVDKLNLDGETYLRIIDYKTGSKKFDLNKFYNGLQMQLLVYLDALINNSENIVENQAMPGAILYFRIDDPILKSKGDLTEEEIKSEVLKELKLEGLLLDDVKVVKAMDNTLEPGTHSLIIPANMKKAGDLGKNKALITMEQFELLRKYVNEKMVEICQNMIEGKIDIEPCKENKNIVCDYCNYSHICQFDSSLEDNRYKVIPKKKDEDIWKSINEKVGGEVNGD.

ATP is bound at residue 8-15 (GRAGTGKS). [4Fe-4S] cluster-binding residues include C791, C1112, C1115, and C1121.

It belongs to the helicase family. AddB/RexB type 1 subfamily. In terms of assembly, heterodimer of AddA and AddB. Mg(2+) serves as cofactor. [4Fe-4S] cluster is required as a cofactor.

Functionally, the heterodimer acts as both an ATP-dependent DNA helicase and an ATP-dependent, dual-direction single-stranded exonuclease. Recognizes the chi site generating a DNA molecule suitable for the initiation of homologous recombination. The AddB subunit has 5' -&gt; 3' nuclease activity but not helicase activity. The sequence is that of ATP-dependent helicase/deoxyribonuclease subunit B from Clostridium perfringens (strain 13 / Type A).